Reading from the N-terminus, the 238-residue chain is MLTHKQLELLDFIQKRMARDGVPPSFDEMKDALDLRSKSGIHRLITALEERGFIRRMAHRARALEIVKLPESMERAAEAERGLQTQPAFTPMLIAGSRTEPPRGALPVAAAALDIPMMGRIAAGVPIEAIAEVAHHVTVPGAMLSGRGEHYALEVKGDSMIQAGINDGDIVVIRSQPTAENGDIVVALVEDLEATLKRYYRRGGMIALEAANPAYETRLLREDQVKVQGRLVGLIRSY.

The segment at residues 26-46 (FDEMKDALDLRSKSGIHRLIT) is a DNA-binding region (H-T-H motif). Catalysis depends on for autocatalytic cleavage activity residues S159 and K197.

The protein belongs to the peptidase S24 family. Homodimer.

It carries out the reaction Hydrolysis of Ala-|-Gly bond in repressor LexA.. In terms of biological role, represses a number of genes involved in the response to DNA damage (SOS response), including recA and lexA. In the presence of single-stranded DNA, RecA interacts with LexA causing an autocatalytic cleavage which disrupts the DNA-binding part of LexA, leading to derepression of the SOS regulon and eventually DNA repair. The protein is LexA repressor of Rhodobacter capsulatus (Rhodopseudomonas capsulata).